The chain runs to 402 residues: Multidrug resistance protein MdtH (402 aa).

Residues methionine 1 to lysine 12 are Cytoplasmic-facing. A helical transmembrane segment spans residues tyrosine 13 to isoleucine 33. Over serine 34 to glutamate 98 the chain is Periplasmic. A helical transmembrane segment spans residues proline 99–phenylalanine 116. The Cytoplasmic portion of the chain corresponds to aspartate 117 to serine 138. The chain crosses the membrane as a helical span at residues leucine 139–leucine 159. Residues glutamine 160–arginine 164 lie on the Periplasmic side of the membrane. Residues leucine 165–leucine 185 form a helical membrane-spanning segment. Over proline 186–tyrosine 213 the chain is Cytoplasmic. The chain crosses the membrane as a helical span at residues valine 214–methionine 234. Residues valine 235–serine 243 lie on the Periplasmic side of the membrane. The helical transmembrane segment at alanine 244–alanine 264 threads the bilayer. Topologically, residues arginine 265–arginine 276 are cytoplasmic. The helical transmembrane segment at leucine 277–leucine 297 threads the bilayer. The Periplasmic portion of the chain corresponds to glutamine 298–glutamine 299. Residues leucine 300–threonine 320 traverse the membrane as a helical segment. Topologically, residues leucine 321 to arginine 339 are cytoplasmic. Residues leucine 340–glycine 360 form a helical membrane-spanning segment. The Periplasmic segment spans residues lysine 361–glutamate 367. The helical transmembrane segment at leucine 368 to phenylalanine 388 threads the bilayer. The Cytoplasmic portion of the chain corresponds to serine 389–alanine 402.

The protein belongs to the major facilitator superfamily. DHA1 family. MdtH (TC 2.A.1.2.21) subfamily.

Its subcellular location is the cell inner membrane. In terms of biological role, confers resistance to norfloxacin and enoxacin. This is Multidrug resistance protein MdtH from Escherichia coli O157:H7.